The following is a 185-amino-acid chain: HTH-type transcriptional regulator Hpr (185 aa).

Positions 13–157 constitute an HTH marR-type domain; it reads AMIFSQRIAQ…LIAILRNIYG (145 aa). The segment at residues 63–86 is a DNA-binding region (H-T-H motif); that stretch reads ISEIAKFGVMHVSTAFNFSKKLEE.

In terms of assembly, homodimer.

In terms of biological role, negative regulator of protease production and sporulation. The chain is HTH-type transcriptional regulator Hpr from Bacillus anthracis (strain CDC 684 / NRRL 3495).